The primary structure comprises 207 residues: Guanylate kinase (207 aa).

The Guanylate kinase-like domain maps to 3–181; the sequence is GLLFVVSAAS…ALHDLESVIT (179 aa). 10 to 17 contributes to the ATP binding site; sequence AASGTGKT.

This sequence belongs to the guanylate kinase family.

It localises to the cytoplasm. It carries out the reaction GMP + ATP = GDP + ADP. In terms of biological role, essential for recycling GMP and indirectly, cGMP. The chain is Guanylate kinase from Acinetobacter baylyi (strain ATCC 33305 / BD413 / ADP1).